The chain runs to 640 residues: Chaperone protein HtpG (640 aa).

The a; substrate-binding stretch occupies residues 1-348; that stretch reads MAQYKFETEV…SEDLPLNVSR (348 aa). The segment at 349 to 565 is b; that stretch reads EILQQNRILS…ETDPSLQMER (217 aa). Residues 566–640 form a c region; sequence MMRAMGQFNT…RLNRLMTNLK (75 aa).

This sequence belongs to the heat shock protein 90 family. Homodimer.

It localises to the cytoplasm. Molecular chaperone. Has ATPase activity. In Treponema denticola (strain ATCC 35405 / DSM 14222 / CIP 103919 / JCM 8153 / KCTC 15104), this protein is Chaperone protein HtpG.